A 219-amino-acid polypeptide reads, in one-letter code: Tegument protein UL14 (219 aa).

A disordered region spans residues 159 to 219 (VHTDAPSRPG…GFARDCPDGE (61 aa)). A compositionally biased stretch (pro residues) spans 186-202 (APPPETAPSPEPAPGPA).

This sequence belongs to the alphaherpesvirinae HHV-1 UL14 protein family. Post-translationally, phosphorylated.

It is found in the virion tegument. The protein localises to the host cytoplasm. Its subcellular location is the host nucleus. Its function is as follows. Contributes to the nuclear transport of the viral transcriptional activator VP16 during the early phase of infection. Therefore, participates indirectly in the regulation of the immediate-early gene expression. Additionally, seems to be important for efficient nuclear targeting of capsids. This is Tegument protein UL14 from Human herpesvirus 2 (strain HG52) (HHV-2).